A 204-amino-acid chain; its full sequence is Thymidine kinase (204 aa).

ATP is bound by residues Gly-15 to Ser-22 and Asp-88 to Gln-91. The active-site Proton acceptor is the Glu-89. The Zn(2+) site is built by Cys-145, Cys-148, Cys-183, and Cys-186.

This sequence belongs to the thymidine kinase family. Homotetramer.

The protein resides in the cytoplasm. The enzyme catalyses thymidine + ATP = dTMP + ADP + H(+). This is Thymidine kinase from Halalkalibacterium halodurans (strain ATCC BAA-125 / DSM 18197 / FERM 7344 / JCM 9153 / C-125) (Bacillus halodurans).